Reading from the N-terminus, the 318-residue chain is MSVVVYAPASIGNVSVGFDVLGAAVSPIDGTLLGDRVLVELGSEAFTLATAGSFVDKLPENPKDNIVYDCWCVFSRELNKKNVALKNVHMILEKNMPIGSGLGSSACSIVAALDALNQFHDNPLNDVELLALMGEMEGQISGGIHYDNVAPCYLGGLQLMVEELGIISQEVPCFDEWYWVMAYPGIKVSTAEAREILPSQYRRQDVIAHGRNLAGFIHACYSKQPELAAKMIKDVVAEPYRERLLPNFAKAREYAASAGALTTGISGSGPTLFSICTDKDVADRVSRWLQENYVQNNEGFVHVCRLDKQGSQVTGSKL.

97 to 107 (PIGSGLGSSAC) is an ATP binding site.

The protein belongs to the GHMP kinase family. Homoserine kinase subfamily.

It localises to the cytoplasm. It catalyses the reaction L-homoserine + ATP = O-phospho-L-homoserine + ADP + H(+). Its pathway is amino-acid biosynthesis; L-threonine biosynthesis; L-threonine from L-aspartate: step 4/5. Catalyzes the ATP-dependent phosphorylation of L-homoserine to L-homoserine phosphate. In Aliivibrio fischeri (strain MJ11) (Vibrio fischeri), this protein is Homoserine kinase.